The following is an 81-amino-acid chain: uncharacterized protein (81 aa).

The next 2 helical transmembrane spans lie at 10–30 (FFVLLFIFTILFLIVVAFLLL) and 56–76 (VLYLFAFGILAVLFLLIAFAI).

It is found in the host membrane. This is an uncharacterized protein from Acidianus two-tailed virus (ATV).